We begin with the raw amino-acid sequence, 94 residues long: Small ribosomal subunit protein uS19 (94 aa).

The tract at residues 75-94 (SHTRTFKGHAGDKKAAGSKR) is disordered. Residues 83 to 94 (HAGDKKAAGSKR) show a composition bias toward basic and acidic residues.

This sequence belongs to the universal ribosomal protein uS19 family.

In terms of biological role, protein S19 forms a complex with S13 that binds strongly to the 16S ribosomal RNA. The polypeptide is Small ribosomal subunit protein uS19 (Nitrosomonas europaea (strain ATCC 19718 / CIP 103999 / KCTC 2705 / NBRC 14298)).